Here is a 308-residue protein sequence, read N- to C-terminus: Ribosomal RNA large subunit methyltransferase F (308 aa).

This sequence belongs to the methyltransferase superfamily. METTL16/RlmF family.

It is found in the cytoplasm. It carries out the reaction adenosine(1618) in 23S rRNA + S-adenosyl-L-methionine = N(6)-methyladenosine(1618) in 23S rRNA + S-adenosyl-L-homocysteine + H(+). Its function is as follows. Specifically methylates the adenine in position 1618 of 23S rRNA. This chain is Ribosomal RNA large subunit methyltransferase F, found in Escherichia fergusonii (strain ATCC 35469 / DSM 13698 / CCUG 18766 / IAM 14443 / JCM 21226 / LMG 7866 / NBRC 102419 / NCTC 12128 / CDC 0568-73).